We begin with the raw amino-acid sequence, 184 residues long: GTP cyclohydrolase 1 (184 aa).

Residues Cys75, His78, and Cys146 each contribute to the Zn(2+) site.

This sequence belongs to the GTP cyclohydrolase I family. In terms of assembly, homomer.

It catalyses the reaction GTP + H2O = 7,8-dihydroneopterin 3'-triphosphate + formate + H(+). It participates in cofactor biosynthesis; 7,8-dihydroneopterin triphosphate biosynthesis; 7,8-dihydroneopterin triphosphate from GTP: step 1/1. This chain is GTP cyclohydrolase 1, found in Coxiella burnetii (strain Dugway 5J108-111).